Reading from the N-terminus, the 546-residue chain is CTP synthase (546 aa).

The amidoligase domain stretch occupies residues 1 to 266 (MTKYIFVTGG…GDYLVERLGL (266 aa)). A CTP-binding site is contributed by Ser13. Ser13 serves as a coordination point for UTP. 14-19 (SVGKGI) lines the ATP pocket. Tyr54 contributes to the L-glutamine binding site. Residue Asp71 participates in ATP binding. The Mg(2+) site is built by Asp71 and Glu141. Residues 148–150 (DIE), 187–192 (KTKPTQ), and Lys223 contribute to the CTP site. UTP contacts are provided by residues 187-192 (KTKPTQ) and Lys223. In terms of domain architecture, Glutamine amidotransferase type-1 spans 291 to 533 (PIALVGKYVE…VAAAAQTLLA (243 aa)). Residue Gly353 participates in L-glutamine binding. Catalysis depends on Cys380, which acts as the Nucleophile; for glutamine hydrolysis. L-glutamine contacts are provided by residues 381-384 (LGMQ), Glu404, and Arg461. Active-site residues include His506 and Glu508.

This sequence belongs to the CTP synthase family. In terms of assembly, homotetramer.

It carries out the reaction UTP + L-glutamine + ATP + H2O = CTP + L-glutamate + ADP + phosphate + 2 H(+). It catalyses the reaction L-glutamine + H2O = L-glutamate + NH4(+). The catalysed reaction is UTP + NH4(+) + ATP = CTP + ADP + phosphate + 2 H(+). Its pathway is pyrimidine metabolism; CTP biosynthesis via de novo pathway; CTP from UDP: step 2/2. With respect to regulation, allosterically activated by GTP, when glutamine is the substrate; GTP has no effect on the reaction when ammonia is the substrate. The allosteric effector GTP functions by stabilizing the protein conformation that binds the tetrahedral intermediate(s) formed during glutamine hydrolysis. Inhibited by the product CTP, via allosteric rather than competitive inhibition. Functionally, catalyzes the ATP-dependent amination of UTP to CTP with either L-glutamine or ammonia as the source of nitrogen. Regulates intracellular CTP levels through interactions with the four ribonucleotide triphosphates. This Chloroflexus aurantiacus (strain ATCC 29366 / DSM 635 / J-10-fl) protein is CTP synthase.